A 206-amino-acid polypeptide reads, in one-letter code: Guanylate kinase (206 aa).

Residues 7 to 185 (GIVLVLCAPS…AYDELRAAYL (179 aa)) form the Guanylate kinase-like domain. 14 to 21 (APSGTGKT) contributes to the ATP binding site.

Belongs to the guanylate kinase family.

Its subcellular location is the cytoplasm. It carries out the reaction GMP + ATP = GDP + ADP. In terms of biological role, essential for recycling GMP and indirectly, cGMP. The polypeptide is Guanylate kinase (Oleidesulfovibrio alaskensis (strain ATCC BAA-1058 / DSM 17464 / G20) (Desulfovibrio alaskensis)).